Here is a 1433-residue protein sequence, read N- to C-terminus: CAP-Gly domain-containing linker protein 1 (1433 aa).

Residues 1–51 (MSMLKPSGLKAPSKTIKHGSTLLKAPASVATAPAEKAPSSEKSSSTTTADA) form a disordered region. The segment covering 32 to 49 (APAEKAPSSEKSSSTTTA) has biased composition (low complexity). Residues 79–121 (GETQFAPGQWAGIVLDEPIGKNDGSVAGVRYFQCEPLRGIFTR) enclose the CAP-Gly 1 domain. A disordered region spans residues 133–208 (DEANGTQTAH…VSNLSEAGSL (76 aa)). The segment covering 140 to 168 (TAHASRATSPTSTSTASAVSASPAALLPS) has biased composition (low complexity). Residues 184-204 (TPSQFSNLSKTASGSVSNLSE) show a composition bias toward polar residues. The region spanning 235–277 (GETDFAKGEWCGVELDEPLGKNDGAVAGTRYFQCQPRYGLFAP) is the CAP-Gly 2 domain. Over residues 319–333 (SLSSVASSVSSKPSR) the composition is skewed to low complexity. The disordered stretch occupies residues 319-338 (SLSSVASSVSSKPSRTGLLT). The stretch at 351 to 1353 (TTALQEALKE…CEAALNGNEE (1003 aa)) forms a coiled coil. The CCHC-type zinc finger occupies 1412-1429 (PYCDTCEMFGHWTADCND).

The protein localises to the cytoplasm. Its subcellular location is the cytoskeleton. It localises to the cytoplasmic vesicle membrane. The protein resides in the cell projection. It is found in the ruffle. Binds to the plus end of microtubules and regulates the dynamics of the microtubule cytoskeleton. Promotes microtubule growth and microtubule bundling. Links cytoplasmic vesicles to microtubules and thereby plays an important role in intracellular vesicle trafficking. Plays a role macropinocytosis and endosome trafficking. The chain is CAP-Gly domain-containing linker protein 1 (CLIP1) from Gallus gallus (Chicken).